Consider the following 426-residue polypeptide: MSVTLINNENNARYEFETIECTRGPKAVDFSKLFETTGFFSYDPGYSSTAGCQSKISYINGKKGELYYRGHRIEDLVAKYKYVDVCRLLLTGELPKNQDESLEFELELRHRSFVHESLLNMFSAFPSNAHPMAKLSSGVSILSTLYSTHQNMHTEEDYQTMARRIVAKIPTLAAICYRNEVGAPIIYPDIARSYVENILFMLRGYPYSRLKHTTQGEVGITPLEVEAFDKILTLHADHGQNASSTTVRNVASTGVHPYAAISAGISALWGHLHGGANEKVLLQLEEIGDVKNVDKYIARVKDKNDNFKLMGFGHRVYKSYDPRAKILKGLKDELHQKGVKMDERLSEIAAKVEEIALKDEYFIERNLYPNVDFYSGTILRALKIPVRFFTPVFVIGRTVGWCAQLLEHVKSPQARITRPRQVYVGD.

Catalysis depends on residues His314 and Asp372.

This sequence belongs to the citrate synthase family.

The enzyme catalyses oxaloacetate + acetyl-CoA + H2O = citrate + CoA + H(+). It participates in carbohydrate metabolism; tricarboxylic acid cycle; isocitrate from oxaloacetate: step 1/2. The protein is Citrate synthase (gltA) of Helicobacter pylori (strain J99 / ATCC 700824) (Campylobacter pylori J99).